Here is a 395-residue protein sequence, read N- to C-terminus: Digeranylgeranylglycerophospholipid reductase (395 aa).

Positions 15, 34, 45, 46, 48, 97, 121, 276, and 288 each coordinate FAD. A 2,3-bis-O-(geranylgeranyl)-sn-glycerol 1-phospholipid is bound at residue Arg-329.

It belongs to the geranylgeranyl reductase family. DGGGPL reductase subfamily. FAD serves as cofactor.

It catalyses the reaction a 2,3-bis-O-phytanyl-sn-glycerol 1-phospholipid + 8 A = a 2,3-bis-O-(geranylgeranyl)-sn-glycerol 1-phospholipid + 8 AH2. The catalysed reaction is 2,3-bis-O-(phytanyl)-sn-glycerol 1-phosphate + 8 A = 2,3-bis-O-(geranylgeranyl)-sn-glycerol 1-phosphate + 8 AH2. The enzyme catalyses CDP-2,3-bis-O-(geranylgeranyl)-sn-glycerol + 8 AH2 = CDP-2,3-bis-O-(phytanyl)-sn-glycerol + 8 A. It carries out the reaction archaetidylserine + 8 AH2 = 2,3-bis-O-phytanyl-sn-glycero-3-phospho-L-serine + 8 A. It participates in membrane lipid metabolism; glycerophospholipid metabolism. Its function is as follows. Is involved in the reduction of 2,3-digeranylgeranylglycerophospholipids (unsaturated archaeols) into 2,3-diphytanylglycerophospholipids (saturated archaeols) in the biosynthesis of archaeal membrane lipids. Catalyzes the formation of archaetidic acid (2,3-di-O-phytanyl-sn-glyceryl phosphate) from 2,3-di-O-geranylgeranylglyceryl phosphate (DGGGP) via the hydrogenation of each double bond of the isoprenoid chains. Is also probably able to reduce double bonds of geranyl groups in CDP-2,3-bis-O-(geranylgeranyl)-sn-glycerol and archaetidylserine, thus acting at various stages in the biosynthesis of archaeal membrane lipids. The polypeptide is Digeranylgeranylglycerophospholipid reductase (Thermococcus kodakarensis (strain ATCC BAA-918 / JCM 12380 / KOD1) (Pyrococcus kodakaraensis (strain KOD1))).